The sequence spans 750 residues: Photosystem I P700 chlorophyll a apoprotein A1 (750 aa).

The next 8 membrane-spanning stretches (helical) occupy residues 70–93, 156–179, 195–219, 291–309, 346–369, 385–411, 433–455, and 531–549; these read VFSA…FHGA, LYCT…FHYH, LNHH…HVSL, IAHH…GHMY, WHAQ…HHMY, LSLF…IFMV, AIIS…LYIH, and FLVH…LILL. Residues C573 and C582 each coordinate [4Fe-4S] cluster. 2 helical membrane-spanning segments follow: residues 589–610 and 664–686; these read HVFL…HFSW and LSAY…MFLF. H675 provides a ligand contact to chlorophyll a'. Chlorophyll a-binding residues include M683 and Y691. W692 serves as a coordination point for phylloquinone. The helical transmembrane segment at 724-744 threads the bilayer; the sequence is AVGVTHYLLGGIATTWAFFLA.

Belongs to the PsaA/PsaB family. In terms of assembly, the PsaA/B heterodimer binds the P700 chlorophyll special pair and subsequent electron acceptors. PSI consists of a core antenna complex that captures photons, and an electron transfer chain that converts photonic excitation into a charge separation. The eukaryotic PSI reaction center is composed of at least 11 subunits. P700 is a chlorophyll a/chlorophyll a' dimer, A0 is one or more chlorophyll a, A1 is one or both phylloquinones and FX is a shared 4Fe-4S iron-sulfur center. is required as a cofactor.

Its subcellular location is the plastid. The protein resides in the chloroplast thylakoid membrane. It catalyses the reaction reduced [plastocyanin] + hnu + oxidized [2Fe-2S]-[ferredoxin] = oxidized [plastocyanin] + reduced [2Fe-2S]-[ferredoxin]. Functionally, psaA and PsaB bind P700, the primary electron donor of photosystem I (PSI), as well as the electron acceptors A0, A1 and FX. PSI is a plastocyanin-ferredoxin oxidoreductase, converting photonic excitation into a charge separation, which transfers an electron from the donor P700 chlorophyll pair to the spectroscopically characterized acceptors A0, A1, FX, FA and FB in turn. Oxidized P700 is reduced on the lumenal side of the thylakoid membrane by plastocyanin. The chain is Photosystem I P700 chlorophyll a apoprotein A1 from Citrus sinensis (Sweet orange).